The sequence spans 636 residues: 1-deoxy-D-xylulose-5-phosphate synthase (636 aa).

Residues His-74 and 115–117 (AHS) each bind thiamine diphosphate. Asp-146 lines the Mg(2+) pocket. Thiamine diphosphate-binding positions include 147-148 (GS), Asn-176, Tyr-287, and Glu-369. Asn-176 lines the Mg(2+) pocket.

It belongs to the transketolase family. DXPS subfamily. Homodimer. Mg(2+) serves as cofactor. Requires thiamine diphosphate as cofactor.

It carries out the reaction D-glyceraldehyde 3-phosphate + pyruvate + H(+) = 1-deoxy-D-xylulose 5-phosphate + CO2. Its pathway is metabolic intermediate biosynthesis; 1-deoxy-D-xylulose 5-phosphate biosynthesis; 1-deoxy-D-xylulose 5-phosphate from D-glyceraldehyde 3-phosphate and pyruvate: step 1/1. Functionally, catalyzes the acyloin condensation reaction between C atoms 2 and 3 of pyruvate and glyceraldehyde 3-phosphate to yield 1-deoxy-D-xylulose-5-phosphate (DXP). This chain is 1-deoxy-D-xylulose-5-phosphate synthase, found in Polaromonas naphthalenivorans (strain CJ2).